The following is a 412-amino-acid chain: Homoserine dehydrogenase (412 aa).

Residues 9–16 (LGIGTVGG) and Lys105 contribute to the NADP(+) site. Glu190 serves as a coordination point for substrate. Lys205 functions as the Proton donor in the catalytic mechanism. An ACT domain is found at 330–407 (YLRLRAVDKP…ISGKVTRLRM (78 aa)).

This sequence belongs to the homoserine dehydrogenase family.

The enzyme catalyses L-homoserine + NADP(+) = L-aspartate 4-semialdehyde + NADPH + H(+). The catalysed reaction is L-homoserine + NAD(+) = L-aspartate 4-semialdehyde + NADH + H(+). It functions in the pathway amino-acid biosynthesis; L-methionine biosynthesis via de novo pathway; L-homoserine from L-aspartate: step 3/3. The protein operates within amino-acid biosynthesis; L-threonine biosynthesis; L-threonine from L-aspartate: step 3/5. This is Homoserine dehydrogenase (hom) from Methylobacillus glycogenes.